Here is an 85-residue protein sequence, read N- to C-terminus: Large ribosomal subunit protein bL27 (85 aa).

The tract at residues 1 to 20 is disordered; that stretch reads MAHKKAGGSTRNGRDSEAKR.

This sequence belongs to the bacterial ribosomal protein bL27 family.

The polypeptide is Large ribosomal subunit protein bL27 (Proteus mirabilis (strain HI4320)).